A 438-amino-acid chain; its full sequence is Dihydroorotase (438 aa).

The Zn(2+) site is built by His58 and His60. Residues 60 to 62 and Asn92 each bind substrate; that span reads HLR. Zn(2+)-binding residues include Asp152, His179, and His232. Asn278 is a binding site for substrate. Asp305 lines the Zn(2+) pocket. Asp305 is an active-site residue. Residues His309 and 323–324 contribute to the substrate site; that span reads FG.

This sequence belongs to the metallo-dependent hydrolases superfamily. DHOase family. Class I DHOase subfamily. The cofactor is Zn(2+).

The catalysed reaction is (S)-dihydroorotate + H2O = N-carbamoyl-L-aspartate + H(+). It participates in pyrimidine metabolism; UMP biosynthesis via de novo pathway; (S)-dihydroorotate from bicarbonate: step 3/3. Functionally, catalyzes the reversible cyclization of carbamoyl aspartate to dihydroorotate. The polypeptide is Dihydroorotase (Leifsonia xyli subsp. xyli (strain CTCB07)).